A 242-amino-acid polypeptide reads, in one-letter code: Methylthioribulose-1-phosphate dehydratase (242 aa).

The tract at residues 1 to 23 is disordered; it reads MTDQREEPQGSNDHLVRSSDPEH. Residue cysteine 102 participates in substrate binding. Zn(2+) contacts are provided by histidine 119 and histidine 121. Residue glutamate 148 is the Proton donor/acceptor of the active site. Position 204 (histidine 204) interacts with Zn(2+).

The protein belongs to the aldolase class II family. MtnB subfamily. Zn(2+) is required as a cofactor.

It localises to the cytoplasm. It carries out the reaction 5-(methylsulfanyl)-D-ribulose 1-phosphate = 5-methylsulfanyl-2,3-dioxopentyl phosphate + H2O. It participates in amino-acid biosynthesis; L-methionine biosynthesis via salvage pathway; L-methionine from S-methyl-5-thio-alpha-D-ribose 1-phosphate: step 2/6. Catalyzes the dehydration of methylthioribulose-1-phosphate (MTRu-1-P) into 2,3-diketo-5-methylthiopentyl-1-phosphate (DK-MTP-1-P). This chain is Methylthioribulose-1-phosphate dehydratase, found in Uncinocarpus reesii (strain UAMH 1704).